An 82-amino-acid polypeptide reads, in one-letter code: Short neurotoxin OKI-10 (82 aa).

The signal sequence occupies residues 1–20 (KTLLLTLVVVTIVCLDLGYT). Disulfide bonds link Cys-23/Cys-44, Cys-37/Cys-61, Cys-63/Cys-74, and Cys-75/Cys-80.

Belongs to the three-finger toxin family. Short-chain subfamily. Type I alpha-neurotoxin sub-subfamily. In terms of tissue distribution, expressed by the venom gland.

It is found in the secreted. Binds to muscle nicotinic acetylcholine receptor (nAChR) and inhibit acetylcholine from binding to the receptor, thereby impairing neuromuscular transmission. The chain is Short neurotoxin OKI-10 from Laticauda laticaudata (Blue-ringed sea krait).